Reading from the N-terminus, the 276-residue chain is 2,3,4,5-tetrahydropyridine-2,6-dicarboxylate N-succinyltransferase (276 aa).

Positions 100 and 137 each coordinate substrate.

Belongs to the transferase hexapeptide repeat family. In terms of assembly, homotrimer.

Its subcellular location is the cytoplasm. The enzyme catalyses (S)-2,3,4,5-tetrahydrodipicolinate + succinyl-CoA + H2O = (S)-2-succinylamino-6-oxoheptanedioate + CoA. Its pathway is amino-acid biosynthesis; L-lysine biosynthesis via DAP pathway; LL-2,6-diaminopimelate from (S)-tetrahydrodipicolinate (succinylase route): step 1/3. The polypeptide is 2,3,4,5-tetrahydropyridine-2,6-dicarboxylate N-succinyltransferase (Zymomonas mobilis subsp. mobilis (strain ATCC 31821 / ZM4 / CP4)).